Here is a 571-residue protein sequence, read N- to C-terminus: Potassium-transporting ATPase potassium-binding subunit (571 aa).

The next 12 helical transmembrane spans lie at 5–25, 64–84, 136–156, 179–199, 220–240, 254–274, 285–305, 330–350, 375–395, 421–441, 488–508, and 527–547; these read GWMQ…PLGG, LAYA…LYAL, GLTH…VALI, LYVL…QGMP, VGPV…GGFF, LSNF…TNVF, WAIL…TYWA, FGIA…CGAV, IIGG…VAIF, MLGI…ATVV, LAIG…AIAG, and GGLF…LTFF.

Belongs to the KdpA family. In terms of assembly, the system is composed of three essential subunits: KdpA, KdpB and KdpC.

Its subcellular location is the cell inner membrane. In terms of biological role, part of the high-affinity ATP-driven potassium transport (or Kdp) system, which catalyzes the hydrolysis of ATP coupled with the electrogenic transport of potassium into the cytoplasm. This subunit binds the periplasmic potassium ions and delivers the ions to the membrane domain of KdpB through an intramembrane tunnel. The polypeptide is Potassium-transporting ATPase potassium-binding subunit (Methylorubrum extorquens (strain CM4 / NCIMB 13688) (Methylobacterium extorquens)).